The primary structure comprises 277 residues: Energy-coupling factor transporter ATP-binding protein EcfA1 (277 aa).

Residues 4–238 (IETQDLCHTY…PDLLSSVRLD (235 aa)) form the ABC transporter domain. 37 to 44 (GPNGAGKS) serves as a coordination point for ATP.

The protein belongs to the ABC transporter superfamily. Energy-coupling factor EcfA family. Forms a stable energy-coupling factor (ECF) transporter complex composed of 2 membrane-embedded substrate-binding proteins (S component), 2 ATP-binding proteins (A component) and 2 transmembrane proteins (T component).

Its subcellular location is the cell membrane. ATP-binding (A) component of a common energy-coupling factor (ECF) ABC-transporter complex. Unlike classic ABC transporters this ECF transporter provides the energy necessary to transport a number of different substrates. This is Energy-coupling factor transporter ATP-binding protein EcfA1 from Methanospirillum hungatei JF-1 (strain ATCC 27890 / DSM 864 / NBRC 100397 / JF-1).